Consider the following 48-residue polypeptide: Large ribosomal subunit protein bL33A (48 aa).

Belongs to the bacterial ribosomal protein bL33 family.

The chain is Large ribosomal subunit protein bL33A from Bacillus anthracis.